A 513-amino-acid polypeptide reads, in one-letter code: Activin receptor type-2A (513 aa).

A signal peptide spans 1 to 19 (MGAAAKLAFAVFLISCSSG). Topologically, residues 20–135 (AILGRSETQE…TSNPVTPKPP (116 aa)) are extracellular. 5 disulfides stabilise this stretch: cysteine 30–cysteine 60, cysteine 50–cysteine 78, cysteine 85–cysteine 104, cysteine 91–cysteine 103, and cysteine 105–cysteine 110. Residues asparagine 43 and asparagine 66 are each glycosylated (N-linked (GlcNAc...) asparagine). The chain crosses the membrane as a helical span at residues 136-161 (YYNILLYSLVPLMLIAGIVICAFWVY). Residues 162–513 (RHHMMAYPPV…VDFPPKESSL (352 aa)) lie on the Cytoplasmic side of the membrane. A Protein kinase domain is found at 192-485 (LQLLEVKARG…GERITQMQRL (294 aa)). ATP contacts are provided by residues 198 to 206 (KARGRFGCV) and lysine 219. Aspartate 322 (proton acceptor) is an active-site residue.

This sequence belongs to the protein kinase superfamily. TKL Ser/Thr protein kinase family. TGFB receptor subfamily. Part of a complex consisting of MAGI2/ARIP1, ACVR2A, ACVR1B and SMAD3. Interacts with MAGI2/ARIP1. Interacts with type I receptor ACVR1. Interacts with BMP7. Interacts with TSC22D1/TSC-22. Interacts with activin A/INHBA. It depends on Mg(2+) as a cofactor. Mn(2+) serves as cofactor.

The protein resides in the cell membrane. It catalyses the reaction L-threonyl-[receptor-protein] + ATP = O-phospho-L-threonyl-[receptor-protein] + ADP + H(+). It carries out the reaction L-seryl-[receptor-protein] + ATP = O-phospho-L-seryl-[receptor-protein] + ADP + H(+). On ligand binding, forms a receptor complex consisting of two type II and two type I transmembrane serine/threonine kinases. Type II receptors phosphorylate and activate type I receptors which autophosphorylate, then bind and activate SMAD transcriptional regulators. Receptor for activin A, activin B and inhibin A. Mediates induction of adipogenesis by GDF6. This is Activin receptor type-2A from Rattus norvegicus (Rat).